We begin with the raw amino-acid sequence, 1150 residues long: Voltage-dependent calcium channel subunit alpha-2/delta-2 (1150 aa).

The first 18 residues, 1–18 (MAVPARTCGASRPGPART), serve as a signal peptide directing secretion. Positions 1–41 (MAVPARTCGASRPGPARTARPWPGCGPHPGPGTRRPTSGPP) are disordered. Residues 19–1113 (ARPWPGCGPH…TEDTSDCGRG (1095 aa)) lie on the Extracellular side of the membrane. In terms of domain architecture, VWFA spans 291-469 (DMVIIVDVSG…INTQEYLDVL (179 aa)). A divalent metal cation is bound by residues Asp297, Ser299, and Ser301. The MIDAS-like motif motif lies at 297–301 (DVSGS). N-linked (GlcNAc...) asparagine glycosylation is found at Asn386, Asn418, Asn507, Asn540, Asn624, and Asn861. A disulfide bond links Cys443 and Cys1098. Residues 485-574 (WTNVYEDALG…KPQTTNFREP (90 aa)) enclose the Cache domain. The chain crosses the membrane as a helical span at residues 1114–1134 (ASFPPSLGVLVSLQLLLLLGL). The Cytoplasmic segment spans residues 1135–1150 (PPRPQPQVLVHASRRL).

It belongs to the calcium channel subunit alpha-2/delta family. As to quaternary structure, dimer formed of alpha-2-2 and delta-2 chains; disulfide-linked. Voltage-dependent calcium channels are multisubunit complexes, consisting of alpha-1 (CACNA1), alpha-2 (CACNA2D), beta (CACNB) and delta (CACNA2D) subunits in a 1:1:1:1 ratio. Post-translationally, may be proteolytically processed into subunits alpha-2-2 and delta-2 that are disulfide-linked. It is however unclear whether such cleavage really takes place in vivo and has a functional role. As to expression, predominantly present in cerebellar cortex. Present in various lung tumor cell lines, while it is absent in normal lung (at protein level). Highly expressed in heart, lung, testis, pancreas and skeletal muscle. Also expressed in kidney, liver, placenta and brain.

It localises to the membrane. Its function is as follows. The alpha-2/delta subunit of voltage-dependent calcium channels regulates calcium current density and activation/inactivation kinetics of the calcium channel. Acts as a regulatory subunit for P/Q-type calcium channel (CACNA1A), N-type (CACNA1B), L-type (CACNA1C OR CACNA1D) and possibly T-type (CACNA1G). Overexpression induces apoptosis. The polypeptide is Voltage-dependent calcium channel subunit alpha-2/delta-2 (CACNA2D2) (Homo sapiens (Human)).